The sequence spans 291 residues: Secretory carrier-associated membrane protein 5 (291 aa).

Basic and acidic residues predominate over residues 1-10; that stretch reads MGGRYDRNTF. A disordered region spans residues 1–66; the sequence is MGGRYDRNTF…GSGAQDLKKK (66 aa). Over 1–126 the chain is Cytoplasmic; it reads MGGRYDRNTF…EILVRLQRLQ (126 aa). Ser-34 is subject to Phosphoserine. A coiled-coil region spans residues 58–94; sequence SGAQDLKKKEKELQAKEADLRRREQDLKRKQDAAARA. The next 4 membrane-spanning stretches (helical) occupy residues 127-147, 159-179, 194-214, and 242-262; these read YIAF…IIAV, IWLL…VLWY, FGWF…AAVA, and IFYF…IWVI. At 263–288 the chain is on the cytoplasmic side; it reads QQVYMYFRGSGKADDMRRDAARGAMR.

This sequence belongs to the SCAMP family.

It localises to the cell membrane. The protein resides in the cytoplasmic vesicle. Its subcellular location is the secretory vesicle membrane. Probably involved in membrane trafficking. The protein is Secretory carrier-associated membrane protein 5 (SCAMP5) of Arabidopsis thaliana (Mouse-ear cress).